The chain runs to 76 residues: Alpha/kappa-conotoxin-like pl14.3 (76 aa).

Residues 1-27 form the signal peptide; that stretch reads MPSVRSVACCCLLWMMLSVQLVTPGSP. Positions 28 to 39 are excised as a propeptide; it reads ATAQLSGQRTAR. Disulfide bonds link Cys46–Cys61 and Cys50–Cys63. Position 64 is an aspartic acid 1-amide (Asp64). A propeptide spanning residues 65–76 is cleaved from the precursor; it reads GKRDVVSSSMAV.

The protein belongs to the conotoxin J superfamily. In terms of tissue distribution, expressed by the venom duct.

It is found in the secreted. In terms of biological role, highly inhibits both nicotinic acetylcholine receptors (neuronal (alpha-3/beta-4) and muscular (alpha-1/beta-1/epsilon/delta) subtypes) and the voltage-gated potassium channel Kv1.6/KCNA6 subtype. The chain is Alpha/kappa-conotoxin-like pl14.3 from Conus planorbis (Planorbis cone).